The primary structure comprises 491 residues: Keratin, type II microfibrillar, component 7C (491 aa).

At cysteine 1 the chain carries Blocked amino end (Cys). Residues 1–109 (CGFSTVGSGF…PNAQCVKQEE (109 aa)) form a head region. The 312-residue stretch at 109-420 (EKEQIKCLNN…RLLEGEEQRL (312 aa)) folds into the IF rod domain. The tract at residues 110-144 (KEQIKCLNNRFAAFIDKVRFLEQQNKLLETKLQFF) is coil 1A. The linker 1 stretch occupies residues 145-154 (QNRQCCESNL). Positions 155 to 255 (EPLFEGYIET…YQEEIRVLQA (101 aa)) are coil 1B. Residues 256 to 272 (NISDTSVIVKMDNSRDL) are linker 12. The coil 2 stretch occupies residues 273–416 (NMDCIVAEIK…ATYRRLLEGE (144 aa)). The segment at 417 to 491 (EQRLCEGVGA…GGGSCSLGRC (75 aa)) is tail.

This sequence belongs to the intermediate filament family.

Its function is as follows. Wool microfibrillar keratin. The sequence is that of Keratin, type II microfibrillar, component 7C from Ovis aries (Sheep).